Consider the following 645-residue polypeptide: Cytochrome c oxidase subunit 1 (645 aa).

A helical membrane pass occupies residues 8-28 (LNYFYFSMWTGLSGAALATMI). Ca(2+)-binding residues include glutamate 31 and glycine 36. Histidine 54 is a binding site for Fe(II)-heme a. The next 8 membrane-spanning stretches (helical) occupy residues 56 to 76 (LIMVFFVVVPIFFGGFANFLI), 90 to 110 (LNSIGFWIQPLGFLLVAKIAF), 247 to 267 (VLSVAVVLAGISTTISLLTLI), 282 to 302 (VLIPFITISLLLTLRLLAIVT), 337 to 357 (LFWFFGHPEVYILIIPSFGVA), 376 to 396 (IWAVYVMAYMGFVVWGHHMYL), 410 to 430 (ITIMICLPATIKLVNWTLTLA), and 438 to 458 (LVFLFFCSYVFFFLTGGFTGM). Cu cation is bound at residue histidine 343. The 1'-histidyl-3'-tyrosine (His-Tyr) cross-link spans 343–347 (HPEVY). Tyrosine 347 provides a ligand contact to O2. Cu cation is bound by residues histidine 392 and histidine 393. Residues histidine 470 and aspartate 471 each contribute to the Mg(2+) site. 3 helical membrane passes run 475–495 (VVAHFHLMLAGAAMMGAFTGL), 513–533 (FLHLVYYSAGIWTTFFPMFFL), and 555–575 (LASCGHFLTLAGVCFFFFGIF). Histidine 478 provides a ligand contact to heme a3. Histidine 480 contributes to the Fe(II)-heme a binding site.

This sequence belongs to the heme-copper respiratory oxidase family. Component of the cytochrome c oxidase (complex IV, CIV), a multisubunit enzyme composed of a catalytic core of 3 subunits and several supernumerary subunits. The complex exists as a monomer or a dimer and forms supercomplexes (SCs) in the inner mitochondrial membrane with ubiquinol-cytochrome c oxidoreductase (cytochrome b-c1 complex, complex III, CIII). Heme serves as cofactor. The cofactor is Cu cation.

Its subcellular location is the mitochondrion inner membrane. The catalysed reaction is 4 Fe(II)-[cytochrome c] + O2 + 8 H(+)(in) = 4 Fe(III)-[cytochrome c] + 2 H2O + 4 H(+)(out). Its pathway is energy metabolism; oxidative phosphorylation. In terms of biological role, component of the cytochrome c oxidase, the last enzyme in the mitochondrial electron transport chain which drives oxidative phosphorylation. The respiratory chain contains 3 multisubunit complexes succinate dehydrogenase (complex II, CII), ubiquinol-cytochrome c oxidoreductase (cytochrome b-c1 complex, complex III, CIII) and cytochrome c oxidase (complex IV, CIV), that cooperate to transfer electrons derived from NADH and succinate to molecular oxygen, creating an electrochemical gradient over the inner membrane that drives transmembrane transport and the ATP synthase. Cytochrome c oxidase is the component of the respiratory chain that catalyzes the reduction of oxygen to water. Electrons originating from reduced cytochrome c in the intermembrane space (IMS) are transferred via the dinuclear copper A center (CU(A)) of subunit 2 and heme A of subunit 1 to the active site in subunit 1, a binuclear center (BNC) formed by heme A3 and copper B (CU(B)). The BNC reduces molecular oxygen to 2 water molecules using 4 electrons from cytochrome c in the IMS and 4 protons from the mitochondrial matrix. The polypeptide is Cytochrome c oxidase subunit 1 (COI) (Paramecium tetraurelia).